The primary structure comprises 179 residues: Small ribosomal subunit protein uS5 (179 aa).

Positions 22–85 constitute an S5 DRBM domain; sequence MIEKLVAVNR…EYARKRMANV (64 aa).

It belongs to the universal ribosomal protein uS5 family. As to quaternary structure, part of the 30S ribosomal subunit. Contacts proteins S4 and S8.

Functionally, with S4 and S12 plays an important role in translational accuracy. Located at the back of the 30S subunit body where it stabilizes the conformation of the head with respect to the body. This chain is Small ribosomal subunit protein uS5, found in Xylella fastidiosa (strain M12).